Here is a 411-residue protein sequence, read N- to C-terminus: Na(+)-translocating NADH-quinone reductase subunit F (411 aa).

A helical membrane pass occupies residues 5 to 25 (VILALGIAAFTVIVLVLVAII). The 2Fe-2S ferredoxin-type domain maps to 36 to 130 (GDITIDINDD…NMEVELPEEI (95 aa)). [2Fe-2S] cluster contacts are provided by C73, C79, C82, and C114. Positions 133–273 (VKKWECTVIS…SGPFGEFFAK (141 aa)) constitute an FAD-binding FR-type domain.

It belongs to the NqrF family. As to quaternary structure, composed of six subunits; NqrA, NqrB, NqrC, NqrD, NqrE and NqrF. [2Fe-2S] cluster is required as a cofactor. Requires FAD as cofactor.

It localises to the cell inner membrane. It carries out the reaction a ubiquinone + n Na(+)(in) + NADH + H(+) = a ubiquinol + n Na(+)(out) + NAD(+). NQR complex catalyzes the reduction of ubiquinone-1 to ubiquinol by two successive reactions, coupled with the transport of Na(+) ions from the cytoplasm to the periplasm. The first step is catalyzed by NqrF, which accepts electrons from NADH and reduces ubiquinone-1 to ubisemiquinone by a one-electron transfer pathway. The protein is Na(+)-translocating NADH-quinone reductase subunit F of Haemophilus influenzae (strain 86-028NP).